A 259-amino-acid chain; its full sequence is Deoxyribose-phosphate aldolase (259 aa).

Aspartate 102 functions as the Proton donor/acceptor in the catalytic mechanism. Lysine 167 functions as the Schiff-base intermediate with acetaldehyde in the catalytic mechanism. The active-site Proton donor/acceptor is lysine 201.

This sequence belongs to the DeoC/FbaB aldolase family. DeoC type 2 subfamily.

It localises to the cytoplasm. It carries out the reaction 2-deoxy-D-ribose 5-phosphate = D-glyceraldehyde 3-phosphate + acetaldehyde. It participates in carbohydrate degradation; 2-deoxy-D-ribose 1-phosphate degradation; D-glyceraldehyde 3-phosphate and acetaldehyde from 2-deoxy-alpha-D-ribose 1-phosphate: step 2/2. Its function is as follows. Catalyzes a reversible aldol reaction between acetaldehyde and D-glyceraldehyde 3-phosphate to generate 2-deoxy-D-ribose 5-phosphate. The chain is Deoxyribose-phosphate aldolase from Escherichia coli O8 (strain IAI1).